The chain runs to 208 residues: MNVYVTLKTKLVAELRQIKQTLQTERNIIRVLRRKLKQIAAQKRFIKFLPKLRYLPTPVTKIEQTARFLVKKFVDPKMKYPMDSIYDKKLSRQSKKVAASRKKKWQRLEKYLGGISNMTKIKEKQIANNVAIIIGQQEEMNAVRECQKLGIKMFHIVDTNCNPGLADHFIPANDDARNSIKFILGKFLTRIRLAHKIKVKFKKTSLKK.

This sequence belongs to the universal ribosomal protein uS2 family.

It localises to the plastid. Its subcellular location is the chloroplast. The polypeptide is Putative ribosomal protein uS2-like (rps2-2) (Chlamydomonas reinhardtii (Chlamydomonas smithii)).